A 184-amino-acid polypeptide reads, in one-letter code: Adenylate kinase 2 (184 aa).

10 to 15 lines the ATP pocket; it reads GSGKST. The interval 30-59 is NMP; sequence STGEILREAISHLSELGRHAQPYMIKGELV. Residues threonine 31, arginine 36, 57-59, 85-88, and glutamine 92 contribute to the AMP site; these read ELV and GYPR. The tract at residues 126-132 is LID; sequence GRSLPDD. Arginine 127 is an ATP binding site. Arginine 140 is a binding site for AMP. Glutamine 168 lines the ATP pocket.

It belongs to the adenylate kinase family. As to quaternary structure, monomer.

The protein localises to the cytoplasm. It carries out the reaction AMP + ATP = 2 ADP. It participates in purine metabolism; AMP biosynthesis via salvage pathway; AMP from ADP: step 1/1. Its function is as follows. Catalyzes the reversible transfer of the terminal phosphate group between ATP and AMP. Plays an important role in cellular energy homeostasis and in adenine nucleotide metabolism. The sequence is that of Adenylate kinase 2 from Nostoc sp. (strain PCC 7120 / SAG 25.82 / UTEX 2576).